Here is a 459-residue protein sequence, read N- to C-terminus: Cysteine--tRNA ligase (459 aa).

Zn(2+) is bound at residue C31. Positions 33–43 match the 'HIGH' region motif; sequence PTVYYNPHIGN. Positions 216, 241, and 245 each coordinate Zn(2+). The short motif at 274–278 is the 'KMSKS' region element; it reads KMSKS. K277 is a binding site for ATP.

The protein belongs to the class-I aminoacyl-tRNA synthetase family. As to quaternary structure, monomer. Zn(2+) serves as cofactor.

It localises to the cytoplasm. The catalysed reaction is tRNA(Cys) + L-cysteine + ATP = L-cysteinyl-tRNA(Cys) + AMP + diphosphate. In Rickettsia peacockii (strain Rustic), this protein is Cysteine--tRNA ligase.